Here is a 367-residue protein sequence, read N- to C-terminus: MNTTSNTSNIIVGLSGGVDSSVTAALLKQQGYQVRGVFMQNWENDDNDEYCSIKQDSFDAIAVADIVGIDIDIVNFAAQYKDKVFAYFLQEYSAGRTPNPDVLCNAEIKFKCFLDYAVGQGADTIATGHYARKEARNGVHYLLKGLDRNKDQSYFLYRLKPFQLERAIFPLGGLEKPEVRRLAAEFNLPTAAKKDSTGICFIGERPFREFLQKYLPTDNGKMVTPEGKTIGEHVGLMFYTLGQRKGLGIGGAGEPWFVAAKDLTKNELIVVQGHDHPLLYTRSLVMNDLSFTLPERPKAGRYTCKTRYRMADAPCELCYLDDETAELVFDEPQWAVTPGQSAVLYDVDICLGGGIIQTTDKPVIITR.

Residues Gly-13–Ser-20 and Met-39 each bind ATP. An interaction with target base in tRNA region spans residues Asn-99–Asp-101. Cys-104 (nucleophile) is an active-site residue. Cys-104 and Cys-200 are oxidised to a cystine. Residue Gly-128 coordinates ATP. The segment at Lys-150–Gln-152 is interaction with tRNA. Cys-200 serves as the catalytic Cysteine persulfide intermediate. The tract at residues Arg-307–Tyr-308 is interaction with tRNA.

Belongs to the MnmA/TRMU family.

The protein localises to the cytoplasm. It catalyses the reaction S-sulfanyl-L-cysteinyl-[protein] + uridine(34) in tRNA + AH2 + ATP = 2-thiouridine(34) in tRNA + L-cysteinyl-[protein] + A + AMP + diphosphate + H(+). Functionally, catalyzes the 2-thiolation of uridine at the wobble position (U34) of tRNA, leading to the formation of s(2)U34. The polypeptide is tRNA-specific 2-thiouridylase MnmA (Neisseria gonorrhoeae (strain ATCC 700825 / FA 1090)).